Here is a 205-residue protein sequence, read N- to C-terminus: tRNA (guanine-N(7)-)-methyltransferase (205 aa).

4 residues coordinate S-adenosyl-L-methionine: E36, E61, D88, and D109. D109 is an active-site residue. K113 serves as a coordination point for substrate. The segment at 115-120 (RHEKRR) is interaction with RNA. Substrate contacts are provided by residues D145 and 183-186 (TGYE).

The protein belongs to the class I-like SAM-binding methyltransferase superfamily. TrmB family.

The enzyme catalyses guanosine(46) in tRNA + S-adenosyl-L-methionine = N(7)-methylguanosine(46) in tRNA + S-adenosyl-L-homocysteine. It functions in the pathway tRNA modification; N(7)-methylguanine-tRNA biosynthesis. Functionally, catalyzes the formation of N(7)-methylguanine at position 46 (m7G46) in tRNA. The chain is tRNA (guanine-N(7)-)-methyltransferase from Mycoplasmopsis agalactiae (strain NCTC 10123 / CIP 59.7 / PG2) (Mycoplasma agalactiae).